The chain runs to 427 residues: 3-isopropylmalate dehydratase large subunit (427 aa).

[4Fe-4S] cluster-binding residues include C308, C368, and C371.

The protein belongs to the aconitase/IPM isomerase family. LeuC type 2 subfamily. In terms of assembly, heterodimer of LeuC and LeuD. It depends on [4Fe-4S] cluster as a cofactor.

It carries out the reaction (2R,3S)-3-isopropylmalate = (2S)-2-isopropylmalate. It participates in amino-acid biosynthesis; L-leucine biosynthesis; L-leucine from 3-methyl-2-oxobutanoate: step 2/4. Catalyzes the isomerization between 2-isopropylmalate and 3-isopropylmalate, via the formation of 2-isopropylmaleate. This Citrifermentans bemidjiense (strain ATCC BAA-1014 / DSM 16622 / JCM 12645 / Bem) (Geobacter bemidjiensis) protein is 3-isopropylmalate dehydratase large subunit.